We begin with the raw amino-acid sequence, 129 residues long: Succinate dehydrogenase subunit 3-1, mitochondrial (129 aa).

The N-terminal 58 residues, 1–58 (MEKYHSNSRFAPFRDAPFALRGALGSSGSSFSSIDSLRRSSTLEQARGYTSRPLGAVR), are a transit peptide targeting the mitochondrion. Residues 25-35 (GSSGSSFSSID) show a composition bias toward low complexity. Residues 25–80 (GSSGSSFSSIDSLRRSSTLEQARGYTSRPLGAVRPKMLPSGCRPLHTSHPLSAPVA) are disordered. Histidine 87 provides a ligand contact to heme. Residues 105 to 127 (IFGAALGAAIISIPLATKFSLMF) form a helical membrane-spanning segment.

As to quaternary structure, component of complex II composed of eight subunits in plants: four classical SDH subunits SDH1, SDH2, SDH3 and SDH4 (a flavoprotein (FP), an iron-sulfur protein (IP), and a cytochrome b composed of a large and a small subunit.), as well as four subunits unknown in mitochondria from bacteria and heterotrophic eukaryotes. Requires heme as cofactor.

The protein resides in the mitochondrion inner membrane. The protein operates within carbohydrate metabolism; tricarboxylic acid cycle. Functionally, membrane-anchoring subunit of succinate dehydrogenase (SDH). This Oryza sativa subsp. japonica (Rice) protein is Succinate dehydrogenase subunit 3-1, mitochondrial.